A 434-amino-acid polypeptide reads, in one-letter code: Glutamate-1-semialdehyde 2,1-aminomutase 2 (434 aa).

K269 carries the N6-(pyridoxal phosphate)lysine modification.

This sequence belongs to the class-III pyridoxal-phosphate-dependent aminotransferase family. HemL subfamily. In terms of assembly, homodimer. It depends on pyridoxal 5'-phosphate as a cofactor.

It is found in the cytoplasm. The enzyme catalyses (S)-4-amino-5-oxopentanoate = 5-aminolevulinate. The protein operates within porphyrin-containing compound metabolism; protoporphyrin-IX biosynthesis; 5-aminolevulinate from L-glutamyl-tRNA(Glu): step 2/2. The polypeptide is Glutamate-1-semialdehyde 2,1-aminomutase 2 (Exiguobacterium sp. (strain ATCC BAA-1283 / AT1b)).